Reading from the N-terminus, the 1690-residue chain is DNA-directed RNA polymerase subunit beta' (1690 aa).

Zn(2+) is bound by residues cysteine 63, cysteine 65, cysteine 78, and cysteine 81. Mg(2+) is bound by residues aspartate 753, aspartate 755, and aspartate 757. Positions 1107, 1295, 1302, and 1305 each coordinate Zn(2+).

It belongs to the RNA polymerase beta' chain family. As to quaternary structure, the RNAP catalytic core consists of 2 alpha, 1 beta, 1 beta' and 1 omega subunit. When a sigma factor is associated with the core the holoenzyme is formed, which can initiate transcription. Mg(2+) is required as a cofactor. The cofactor is Zn(2+).

The enzyme catalyses RNA(n) + a ribonucleoside 5'-triphosphate = RNA(n+1) + diphosphate. In terms of biological role, DNA-dependent RNA polymerase catalyzes the transcription of DNA into RNA using the four ribonucleoside triphosphates as substrates. The chain is DNA-directed RNA polymerase subunit beta' from Thermotoga maritima (strain ATCC 43589 / DSM 3109 / JCM 10099 / NBRC 100826 / MSB8).